Reading from the N-terminus, the 886-residue chain is Cadherin-1 (886 aa).

A signal peptide spans 1–23 (MGARCRSFSALLLLLQVSSWLCQ). A propeptide spanning residues 24–158 (QPESESDSCR…FHQGLRRQKR (135 aa)) is cleaved from the precursor. Topologically, residues 24 to 713 (QPESESDSCR…SLEAGLQVPA (690 aa)) are extracellular. Cadherin domains follow at residues 159–266 (DWVI…RPEF), 267–379 (IQEV…APIF), 380–490 (NPST…APIF), 491–597 (VPAE…DNAP), and 598–701 (IPEP…NCMK). Residue aspartate 261 participates in Ca(2+) binding. O-linked (Man...) serine glycosylation is found at serine 284 and serine 289. Aspartate 292 contributes to the Ca(2+) binding site. 4 O-linked (Man...) threonine glycosylation sites follow: threonine 362, threonine 474, threonine 476, and threonine 513. Residue asparagine 562 is glycosylated (N-linked (GlcNAc...) asparagine). O-linked (Man...) threonine glycosylation is found at threonine 580, threonine 582, and threonine 584. Asparagine 641 is a glycosylation site (N-linked (GlcNAc...) asparagine). Residues 714-734 (ILGILGGILALLILILLLLLF) form a helical membrane-spanning segment. The Cytoplasmic portion of the chain corresponds to 735-886 (LRRRTVVKEP…ADMYGGGEED (152 aa)). A disordered region spans residues 751–771 (DTRDNVYYYDEEGGGEEDQDF). A phosphotyrosine; by SRC mark is found at tyrosine 757, tyrosine 758, and tyrosine 759. A compositionally biased stretch (acidic residues) spans 759-771 (YDEEGGGEEDQDF). The interval 762-773 (EGGGEEDQDFDL) is required for binding CTNND1 and PSEN1. Serine 774, serine 797, serine 842, serine 844, and serine 850 each carry phosphoserine. The interval 815-886 (IDENLKAADS…ADMYGGGEED (72 aa)) is required for binding alpha, beta and.

In terms of assembly, homodimer; disulfide-linked. Component of an E-cadherin/ catenin adhesion complex composed of at least E-cadherin/CDH1, beta-catenin/CTNNB1 or gamma-catenin/JUP, and potentially alpha-catenin/CTNNA1; the complex is located to adherens junctions. Found in a complex composed of CDH1, RAP1A and PKP3; PKP3 acts as a scaffold protein within the complex, the complex is required for CDH1 localization to mature desmosome cell junctions. Interacts with the TRPV4 and CTNNB1 complex. Interacts with CTNND1. The stable association of CTNNA1 is controversial as CTNNA1 was shown not to bind to F-actin when assembled in the complex. Alternatively, the CTNNA1-containing complex may be linked to F-actin by other proteins such as LIMA1. Interaction with PSEN1, cleaves CDH1 resulting in the disassociation of cadherin-based adherens junctions (CAJs). Interacts with AJAP1 and DLGAP5. Interacts with TBC1D2. Interacts with LIMA1. Interacts with CAV1. Interacts with PIP5K1C. Interacts with DDR1; this stabilizes CDH1 at the cell surface and inhibits its internalization. Interacts with RAPGEF2. Interacts with RAB8B. Interacts with KLRG1. Forms a ternary complex composed of ADAM10, CADH1 and EPHA4; within the complex, CADH1 is cleaved by ADAM10 which disrupts adherens junctions. Interacts with SPEF1. Interacts with CTNNB1 and PKP2. Interacts with AMOTL2; the interaction may facilitate binding of radial actin fibers to cell junction complexes. Interacts with DSG3; the interaction is required for CDH1 localization to developing adherens junctions. During apoptosis or with calcium influx, cleaved by a membrane-bound metalloproteinase (ADAM10), PS1/gamma-secretase and caspase-3. Processing by the metalloproteinase, induced by calcium influx, causes disruption of cell-cell adhesion and the subsequent release of beta-catenin into the cytoplasm. The residual membrane-tethered cleavage product is rapidly degraded via an intracellular proteolytic pathway. Cleavage by caspase-3 releases the cytoplasmic tail resulting in disintegration of the actin microfilament system. The gamma-secretase-mediated cleavage promotes disassembly of adherens junctions. During development of the cochlear organ of Corti, cleavage by ADAM10 at adherens junctions promotes pillar cell separation. Post-translationally, N-glycosylation at Asn-641 is essential for expression, folding and trafficking. Addition of bisecting N-acetylglucosamine by MGAT3 modulates its cell membrane location. In terms of processing, ubiquitinated by a SCF complex containing SKP2, which requires prior phosphorylation by CK1/CSNK1A1. Ubiquitinated by CBLL1/HAKAI, requires prior phosphorylation at Tyr-758. O-glycosylated. O-manosylated by TMTC1, TMTC2, TMTC3 or TMTC4. Ser-289 and Thr-513 are O-manosylated by TMTC2 or TMTC4 but not TMTC1 or TMTC3.

It is found in the cell junction. The protein localises to the adherens junction. The protein resides in the cell membrane. It localises to the endosome. Its subcellular location is the golgi apparatus. It is found in the trans-Golgi network. The protein localises to the cytoplasm. The protein resides in the desmosome. Its function is as follows. Cadherins are calcium-dependent cell adhesion proteins. They preferentially interact with themselves in a homophilic manner in connecting cells; cadherins may thus contribute to the sorting of heterogeneous cell types. CDH1 is involved in mechanisms regulating cell-cell adhesions, mobility and proliferation of epithelial cells. Promotes organization of radial actin fiber structure and cellular response to contractile forces, via its interaction with AMOTL2 which facilitates anchoring of radial actin fibers to CDH1 junction complexes at the cell membrane. Plays a role in the early stages of desmosome cell-cell junction formation via facilitating the recruitment of DSG2 and DSP to desmosome plaques. Has a potent invasive suppressor role. It is a ligand for integrin alpha-E/beta-7. E-Cad/CTF2 promotes non-amyloidogenic degradation of Abeta precursors. Has a strong inhibitory effect on APP C99 and C83 production. This Rattus norvegicus (Rat) protein is Cadherin-1 (Cdh1).